The following is an 810-amino-acid chain: Ecotropic viral integration site 5 protein homolog (810 aa).

Residues 1–483 (MVTNKMTAAF…EAESQCALKE (483 aa)) form an interaction with alpha-tubulin, gamma-tubulin, BIRC5 and FBXO5 region. Disordered stretches follow at residues 49 to 80 (VASP…QLSP) and 98 to 123 (TDSK…SSSA). The segment covering 51-80 (SPSTSLHTTSSSTTLSTPALSPSSPSQLSP) has biased composition (low complexity). S102 and S113 each carry phosphoserine. Over residues 103-123 (LRSVNGSRRNSGSSLVSSSSA) the composition is skewed to low complexity. The dimerization stretch occupies residues 128 to 693 (SHLEEDSWIL…LNKSDSNQYI (566 aa)). The region spanning 163–348 (GIPHHFRAIV…RIFDIFMSEG (186 aa)) is the Rab-GAP TBC domain. Positions 377–810 (QHFQKVIPHQ…RRRESYSTTV (434 aa)) are targeting to the centrosomes. A coiled-coil region spans residues 406 to 716 (KKMKKLEKEY…LRCLKGQRGF (311 aa)). The interaction with AURKB and INCENP stretch occupies residues 487–810 (KVLDIEKRNN…RRRESYSTTV (324 aa)). A phosphoserine mark is found at S497, S689, S776, and S778. A disordered region spans residues 756-810 (GFPLHGKSGSMSLDPAVADGSESETEDSVLETRESNQVVQKERPPRRRESYSTTV). A compositionally biased stretch (basic and acidic residues) spans 785-810 (LETRESNQVVQKERPPRRRESYSTTV).

In terms of assembly, dimeric and monomeric. Interacts with alpha- and gamma-tubulin. Interacts with FBXO5. Interacts with the chromosome passenger complex (CPC) which is at least composed of AURKB/aurora-B, BIRC5/survivin, CDCA8/borealin and INCENP. In terms of processing, probably phosphorylated by PLK1; may be required for degradation during mitosis. Post-translationally, ubiquitinated. Degradation during prophase is ubiquitin-dependent. As to expression, expressed in various cell lines (at protein level). Expressed in a wide range of tissues including brain and adrenal.

It localises to the nucleus. Its subcellular location is the cytoplasm. The protein resides in the cytoskeleton. It is found in the microtubule organizing center. The protein localises to the centrosome. It localises to the spindle. In terms of biological role, functions as a regulator of cell cycle progression by stabilizing the FBXO5 protein and promoting cyclin-A accumulation during interphase. May play a role in cytokinesis. The chain is Ecotropic viral integration site 5 protein homolog (EVI5) from Homo sapiens (Human).